A 101-amino-acid chain; its full sequence is Small ribosomal subunit protein uS14 (101 aa).

This sequence belongs to the universal ribosomal protein uS14 family. As to quaternary structure, part of the 30S ribosomal subunit. Contacts proteins S3 and S10.

Binds 16S rRNA, required for the assembly of 30S particles and may also be responsible for determining the conformation of the 16S rRNA at the A site. The polypeptide is Small ribosomal subunit protein uS14 (Bordetella parapertussis (strain 12822 / ATCC BAA-587 / NCTC 13253)).